Here is a 402-residue protein sequence, read N- to C-terminus: Formate-dependent phosphoribosylglycinamide formyltransferase (402 aa).

N(1)-(5-phospho-beta-D-ribosyl)glycinamide contacts are provided by residues 22-23 (EL) and Glu82. Residues Arg115, Lys160, 165–170 (SSGKGQ), 200–203 (EGFV), and Glu208 contribute to the ATP site. Positions 120-318 (RLAAETLGLP…EFELHARAIL (199 aa)) constitute an ATP-grasp domain. Residues Glu277 and Glu289 each coordinate Mg(2+). Residues Asp296, Lys365, and 372–373 (RR) contribute to the N(1)-(5-phospho-beta-D-ribosyl)glycinamide site.

The protein belongs to the PurK/PurT family. Homodimer.

The catalysed reaction is N(1)-(5-phospho-beta-D-ribosyl)glycinamide + formate + ATP = N(2)-formyl-N(1)-(5-phospho-beta-D-ribosyl)glycinamide + ADP + phosphate + H(+). It participates in purine metabolism; IMP biosynthesis via de novo pathway; N(2)-formyl-N(1)-(5-phospho-D-ribosyl)glycinamide from N(1)-(5-phospho-D-ribosyl)glycinamide (formate route): step 1/1. Functionally, involved in the de novo purine biosynthesis. Catalyzes the transfer of formate to 5-phospho-ribosyl-glycinamide (GAR), producing 5-phospho-ribosyl-N-formylglycinamide (FGAR). Formate is provided by PurU via hydrolysis of 10-formyl-tetrahydrofolate. The chain is Formate-dependent phosphoribosylglycinamide formyltransferase from Mycobacteroides abscessus (strain ATCC 19977 / DSM 44196 / CCUG 20993 / CIP 104536 / JCM 13569 / NCTC 13031 / TMC 1543 / L948) (Mycobacterium abscessus).